The chain runs to 78 residues: MSTIEERVKKIIVEQLGVKQEEVVNNASFVDDLGADSLDTVELVMALEEEFDTEIPDEEAEKITTVQAAIDFIQANQQ.

A Carrier domain is found at 2–77 (STIEERVKKI…AAIDFIQANQ (76 aa)). Serine 37 carries the post-translational modification O-(pantetheine 4'-phosphoryl)serine.

This sequence belongs to the acyl carrier protein (ACP) family. 4'-phosphopantetheine is transferred from CoA to a specific serine of apo-ACP by AcpS. This modification is essential for activity because fatty acids are bound in thioester linkage to the sulfhydryl of the prosthetic group.

The protein resides in the cytoplasm. The protein operates within lipid metabolism; fatty acid biosynthesis. In terms of biological role, carrier of the growing fatty acid chain in fatty acid biosynthesis. The chain is Acyl carrier protein from Pectobacterium atrosepticum (strain SCRI 1043 / ATCC BAA-672) (Erwinia carotovora subsp. atroseptica).